Reading from the N-terminus, the 1138-residue chain is 2'-5'-oligoadenylate synthase 3 (1138 aa).

An N-acetylmethionine modification is found at Met-1. The segment at 6–341 (TPAGALDKLV…GVLVQPWEGP (336 aa)) is OAS domain 1. 2 interaction with dsRNA regions span residues 12 to 56 (DKLV…VIRI) and 185 to 199 (EPRKNFVNTRPAKLK). The interval 342–462 (GLPRAGILDL…GSRMSPDLSQ (121 aa)) is linker. Basic and acidic residues predominate over residues 370-379 (LAVQSKERSQ). 2 disordered regions span residues 370-403 (LAVQSKERSQKPSNSAPGFPEAATKIPAMPNPSA) and 434-459 (TQSTASSHMPPDRSSISTAGSRMSPD). Polar residues predominate over residues 447–459 (SSISTAGSRMSPD). OAS domain stretches follow at residues 463 to 793 (IPSK…PWDV) and 801 to 1135 (TLAE…WPVK). Ser-855 is a binding site for ATP. Positions 867, 869, and 939 each coordinate Mg(2+). The ATP site is built by Arg-998, Lys-1001, and Gln-1020.

Belongs to the 2-5A synthase family. Monomer. Mg(2+) is required as a cofactor. As to expression, intestine.

The protein localises to the cytoplasm. Its subcellular location is the nucleus. The catalysed reaction is 3 ATP = 5'-triphosphoadenylyl-(2'-&gt;5')-adenylyl-(2'-&gt;5')-adenosine + 2 diphosphate. Produced as a latent enzyme which is activated by dsRNA generated during the course of viral infection. Strongly activated by long dsRNAs at least 50 nucleotides in length. ssRNA does not activate the enzyme. Functionally, interferon-induced, dsRNA-activated antiviral enzyme which plays a critical role in cellular innate antiviral response. In addition, it may also play a role in other cellular processes such as apoptosis, cell growth, differentiation and gene regulation. Synthesizes preferentially dimers of 2'-5'-oligoadenylates (2-5A) from ATP which then bind to the inactive monomeric form of ribonuclease L (RNase L) leading to its dimerization and subsequent activation. Activation of RNase L leads to degradation of cellular as well as viral RNA, resulting in the inhibition of protein synthesis, thus terminating viral replication. Can mediate the antiviral effect via the classical RNase L-dependent pathway or an alternative antiviral pathway independent of RNase L. This chain is 2'-5'-oligoadenylate synthase 3 (Oas3), found in Mus musculus (Mouse).